Here is a 143-residue protein sequence, read N- to C-terminus: Methylglyoxal synthase (143 aa).

Residues 1 to 143 (MTVKKIALVA…DYEAYRNRII (143 aa)) enclose the MGS-like domain. Substrate contacts are provided by residues histidine 11, lysine 15, 37 to 40 (TGST), and 57 to 58 (SG). Aspartate 63 functions as the Proton donor/acceptor in the catalytic mechanism. Histidine 90 provides a ligand contact to substrate.

Belongs to the methylglyoxal synthase family.

The catalysed reaction is dihydroxyacetone phosphate = methylglyoxal + phosphate. Functionally, catalyzes the formation of methylglyoxal from dihydroxyacetone phosphate. This chain is Methylglyoxal synthase, found in Coxiella burnetii (strain Dugway 5J108-111).